Here is a 301-residue protein sequence, read N- to C-terminus: Glycine--tRNA ligase alpha subunit (301 aa).

Belongs to the class-II aminoacyl-tRNA synthetase family. In terms of assembly, tetramer of two alpha and two beta subunits.

The protein resides in the cytoplasm. The catalysed reaction is tRNA(Gly) + glycine + ATP = glycyl-tRNA(Gly) + AMP + diphosphate. The polypeptide is Glycine--tRNA ligase alpha subunit (Shewanella piezotolerans (strain WP3 / JCM 13877)).